A 99-amino-acid chain; its full sequence is UPF0473 protein Athe_1150 (99 aa).

It belongs to the UPF0473 family.

The protein is UPF0473 protein Athe_1150 of Caldicellulosiruptor bescii (strain ATCC BAA-1888 / DSM 6725 / KCTC 15123 / Z-1320) (Anaerocellum thermophilum).